The chain runs to 52 residues: UPF0057 membrane protein YqaE (52 aa).

Helical transmembrane passes span 1–21 and 23–43; these read MGFWRIVITIILPPLGVLLGK and FGWAFIINILLTLLGYIPGLI.

This sequence belongs to the UPF0057 (PMP3) family.

The protein localises to the cell membrane. This is UPF0057 membrane protein YqaE (yqaE) from Escherichia coli O157:H7.